The primary structure comprises 273 residues: 4-hydroxy-tetrahydrodipicolinate reductase (273 aa).

NAD(+) is bound by residues 12–17 and glutamate 38; that span reads GAGGRM. Residue arginine 39 coordinates NADP(+). NAD(+) is bound by residues 102 to 104 and 126 to 129; these read GTT and AANF. Histidine 159 acts as the Proton donor/acceptor in catalysis. Histidine 160 contributes to the (S)-2,3,4,5-tetrahydrodipicolinate binding site. Lysine 163 acts as the Proton donor in catalysis. Position 169–170 (169–170) interacts with (S)-2,3,4,5-tetrahydrodipicolinate; it reads GT.

Belongs to the DapB family. Homotetramer.

Its subcellular location is the cytoplasm. The enzyme catalyses (S)-2,3,4,5-tetrahydrodipicolinate + NAD(+) + H2O = (2S,4S)-4-hydroxy-2,3,4,5-tetrahydrodipicolinate + NADH + H(+). The catalysed reaction is (S)-2,3,4,5-tetrahydrodipicolinate + NADP(+) + H2O = (2S,4S)-4-hydroxy-2,3,4,5-tetrahydrodipicolinate + NADPH + H(+). It participates in amino-acid biosynthesis; L-lysine biosynthesis via DAP pathway; (S)-tetrahydrodipicolinate from L-aspartate: step 4/4. In terms of biological role, catalyzes the conversion of 4-hydroxy-tetrahydrodipicolinate (HTPA) to tetrahydrodipicolinate. This chain is 4-hydroxy-tetrahydrodipicolinate reductase, found in Klebsiella pneumoniae (strain 342).